The chain runs to 559 residues: Oxygen-dependent choline dehydrogenase (559 aa).

4–33 is an FAD binding site; sequence DYIIIGAGSAGNVLAARLTEESDVSVLLLE. The disordered stretch occupies residues 182-202; the sequence is EGFGPMDRTVTPKGRRASTAR. The active-site Proton acceptor is the histidine 471.

This sequence belongs to the GMC oxidoreductase family. FAD serves as cofactor.

The enzyme catalyses choline + A = betaine aldehyde + AH2. It catalyses the reaction betaine aldehyde + NAD(+) + H2O = glycine betaine + NADH + 2 H(+). The protein operates within amine and polyamine biosynthesis; betaine biosynthesis via choline pathway; betaine aldehyde from choline (cytochrome c reductase route): step 1/1. Involved in the biosynthesis of the osmoprotectant glycine betaine. Catalyzes the oxidation of choline to betaine aldehyde and betaine aldehyde to glycine betaine at the same rate. This is Oxygen-dependent choline dehydrogenase from Pectobacterium atrosepticum (strain SCRI 1043 / ATCC BAA-672) (Erwinia carotovora subsp. atroseptica).